A 501-amino-acid chain; its full sequence is Cytochrome P450 71B3 (501 aa).

A helical membrane pass occupies residues 2 to 22 (SILLYFFFLPVILSLIFMKKF). Cysteine 445 lines the heme pocket.

Belongs to the cytochrome P450 family. The cofactor is heme.

The protein localises to the membrane. This chain is Cytochrome P450 71B3 (CYP71B3), found in Arabidopsis thaliana (Mouse-ear cress).